Reading from the N-terminus, the 79-residue chain is Translational regulator CsrA (79 aa).

It belongs to the CsrA/RsmA family. Homodimer; the beta-strands of each monomer intercalate to form a hydrophobic core, while the alpha-helices form wings that extend away from the core.

Its subcellular location is the cytoplasm. Its function is as follows. A translational regulator that binds mRNA to regulate translation initiation and/or mRNA stability. Usually binds in the 5'-UTR at or near the Shine-Dalgarno sequence preventing ribosome-binding, thus repressing translation. Its main target seems to be the major flagellin gene, while its function is anatagonized by FliW. The chain is Translational regulator CsrA from Solidesulfovibrio magneticus (strain ATCC 700980 / DSM 13731 / RS-1) (Desulfovibrio magneticus).